Consider the following 500-residue polypeptide: Plasma protease C1 inhibitor (500 aa).

The signal sequence occupies residues 1–22 (MASRLTLLTLLLLLLAGDRASS). Residues 20-31 (ASSNPNATSSSS) are compositionally biased toward low complexity. The tract at residues 20 to 43 (ASSNPNATSSSSQDPESLQDRGEG) is disordered. Asn-25 is a glycosylation site (N-linked (GlcNAc...) (complex) asparagine). O-linked (GalNAc...) threonine glycans are attached at residues Thr-47 and Thr-48. Ser-64 carries O-linked (GalNAc...) serine glycosylation. Residues 65–118 (LPTTNSTTNSATKITANTTDEPTTQPTTEPTTQPTIQPTQPTTQLPTDSPTQPT) form a disordered region. A compositionally biased stretch (low complexity) spans 67–118 (TTNSTTNSATKITANTTDEPTTQPTTEPTTQPTIQPTQPTTQLPTDSPTQPT). N-linked (GlcNAc...) asparagine glycosylation is present at Asn-69. Thr-71 carries O-linked (GalNAc...) threonine glycosylation. A glycan (N-linked (GlcNAc...) asparagine) is linked at Asn-81. Residues Thr-83, Thr-88, Thr-92, and Thr-96 are each glycosylated (O-linked (GalNAc...) threonine). A run of 7 repeats spans residues 85–88 (EPTT), 89–92 (QPTT), 93–96 (EPTT), 97–100 (QPTI), 101–104 (QPTQ), 105–108 (PTTQ), and 116–119 (QPTT). Residues 85–119 (EPTTQPTTEPTTQPTIQPTQPTTQLPTDSPTQPTT) form a 7 X 4 AA tandem repeats of [QE]-P-T-[TQ] region. Disulfide bonds link Cys-123–Cys-428 and Cys-130–Cys-205. N-linked (GlcNAc...) (complex) asparagine glycosylation is found at Asn-238 and Asn-253. An N-linked (GlcNAc...) asparagine; in variant TA glycan is attached at Asn-272. Asn-352 carries an N-linked (GlcNAc...) (complex) asparagine glycan.

It belongs to the serpin family. In terms of assembly, interacts with MASP1. (Microbial infection) Binds to E.coli stcE which allows localization of SERPING1 to cell membranes thus protecting the bacteria against complement-mediated lysis. Highly glycosylated (49%) with N- and O-glycosylation. O-glycosylated with core 1 or possibly core 8 glycans. N-glycan heterogeneity at Asn-25: Hex5HexNAc4 (minor), dHex1Hex5HexNAc4 (minor), Hex6HexNAc5 (major) and dHex1Hex6HexNAc5 (minor). Post-translationally, cleaved by C1S in vitro. In terms of processing, (Microbial infection) Can be proteolytically cleaved by E.coli stcE.

The protein resides in the secreted. Serine protease inhibitor, which acrs as a regulator of the classical complement pathway. Forms a proteolytically inactive stoichiometric complex with the C1r or C1s proteases. May also regulate blood coagulation, fibrinolysis and the generation of kinins. Very efficient inhibitor of FXIIa. Inhibits chymotrypsin and kallikrein. In Homo sapiens (Human), this protein is Plasma protease C1 inhibitor (SERPING1).